Consider the following 605-residue polypeptide: Golgi-associated RAB2 interactor protein 3 (605 aa).

2 disordered regions span residues glycine 234 to threonine 265 and tyrosine 407 to lysine 529. Positions histidine 239–threonine 265 are enriched in low complexity. The span at lysine 434–alanine 457 shows a compositional bias: basic residues. The Bipartite nuclear localization signal signature appears at arginine 441 to glycine 458. Polar residues predominate over residues lysine 463–histidine 473. The segment covering asparagine 475–glycine 484 has biased composition (basic and acidic residues). Positions arginine 489–serine 500 are enriched in basic residues. Residues glutamine 513–alanine 526 show a composition bias toward polar residues. At serine 592 the chain carries Phosphoserine.

This sequence belongs to the GARIN family. As to quaternary structure, interacts (via N-terminus) with RAB2B (in GTP-bound form). Interacts with FRG1. Expressed in adult spermatocytes and spermatids (at protein level).

It localises to the golgi apparatus. The protein resides in the nucleus. It is found in the cajal body. May be involved in RNA biogenesis. This is Golgi-associated RAB2 interactor protein 3 from Homo sapiens (Human).